The following is a 204-amino-acid chain: MAAAGWRDGSGQEKYRLVVVGGGGVGKSALTIQFIQSYFVTDYDPTIEDSYTKQCVIDDRAARLDILDTAGQEEFGAMREQYMRTGEGFLLVFSVTDRGSFEEIYKFQRQILRVKDRDEFPMILIGNKADLDHQRQVTQEEGQQLARQLKVTYMEASAKIRMNVDQAFHELVRVIRKFQEQECPPSPEPTRKEKDKKGCHCVIF.

Alanine 2 carries the post-translational modification N-acetylalanine. 21–29 provides a ligand contact to GTP; that stretch reads GGGGVGKSA. The Effector region motif lies at 43–51; the sequence is YDPTIEDSY. Residues 68–72, 127–130, and 157–159 each bind GTP; these read DTAGQ, NKAD, and SAK. Serine 186 carries the phosphoserine modification. N6-palmitoyl lysine attachment occurs at residues lysine 192, lysine 194, lysine 196, and lysine 197. The S-palmitoyl cysteine moiety is linked to residue cysteine 199. Cysteine methyl ester is present on cysteine 201. The S-farnesyl cysteine moiety is linked to residue cysteine 201. Residues 202–204 constitute a propeptide, removed in mature form; the sequence is VIF.

It belongs to the small GTPase superfamily. Ras family. Interacts with RASSF5. Post-translationally, may be post-translationally modified by both palmitoylation and polyisoprenylation. Fatty-acylation at Lys-192, Lys-194; lys-196 and Lys-197 is required for localization to the plasma membrane and activity. Defatty-acylated by SIRT6, affecting its localization to the plasma membrane. In terms of tissue distribution, ubiquitously present in all tissues examined, with the highest levels in heart, placenta, and skeletal muscle. Moderate levels in lung and liver; low levels in brain, kidney, and pancreas.

It is found in the cell membrane. The protein resides in the golgi apparatus membrane. The enzyme catalyses GTP + H2O = GDP + phosphate + H(+). Functionally, GTP-binding protein with GTPase activity, involved in the regulation of MAPK signaling pathway and thereby controlling multiple cellular processes. Regulates craniofacial development. In Homo sapiens (Human), this protein is Ras-related protein R-Ras2.